The sequence spans 283 residues: Probable endonuclease 4 (283 aa).

Positions 67, 107, 144, 178, 181, 215, 228, 230, and 260 each coordinate Zn(2+).

Belongs to the AP endonuclease 2 family. Zn(2+) is required as a cofactor.

The catalysed reaction is Endonucleolytic cleavage to 5'-phosphooligonucleotide end-products.. In terms of biological role, endonuclease IV plays a role in DNA repair. It cleaves phosphodiester bonds at apurinic or apyrimidinic (AP) sites, generating a 3'-hydroxyl group and a 5'-terminal sugar phosphate. This chain is Probable endonuclease 4, found in Citrifermentans bemidjiense (strain ATCC BAA-1014 / DSM 16622 / JCM 12645 / Bem) (Geobacter bemidjiensis).